The following is a 311-amino-acid chain: HPr kinase/phosphorylase (311 aa).

Active-site residues include His-139 and Lys-160. Gly-154 to Ser-161 lines the ATP pocket. Ser-161 contacts Mg(2+). Residue Asp-178 is the Proton acceptor; for phosphorylation activity. Proton donor; for dephosphorylation activity of the active site. The interval Ile-202–Asp-211 is important for the catalytic mechanism of both phosphorylation and dephosphorylation. Glu-203 serves as a coordination point for Mg(2+). The active site involves Arg-244. Positions Pro-265 to Arg-270 are important for the catalytic mechanism of dephosphorylation.

The protein belongs to the HPrK/P family. Homohexamer. The cofactor is Mg(2+).

The enzyme catalyses [HPr protein]-L-serine + ATP = [HPr protein]-O-phospho-L-serine + ADP + H(+). The catalysed reaction is [HPr protein]-O-phospho-L-serine + phosphate + H(+) = [HPr protein]-L-serine + diphosphate. Functionally, catalyzes the ATP- as well as the pyrophosphate-dependent phosphorylation of a specific serine residue in HPr, a phosphocarrier protein of the phosphoenolpyruvate-dependent sugar phosphotransferase system (PTS). HprK/P also catalyzes the pyrophosphate-producing, inorganic phosphate-dependent dephosphorylation (phosphorolysis) of seryl-phosphorylated HPr (P-Ser-HPr). The two antagonistic activities of HprK/P are regulated by several intracellular metabolites, which change their concentration in response to the absence or presence of rapidly metabolisable carbon sources (glucose, fructose, etc.) in the growth medium. Therefore, by controlling the phosphorylation state of HPr, HPrK/P is a sensor enzyme that plays a major role in the regulation of carbon metabolism and sugar transport: it mediates carbon catabolite repression (CCR), and regulates PTS-catalyzed carbohydrate uptake and inducer exclusion. This chain is HPr kinase/phosphorylase, found in Caldicellulosiruptor bescii (strain ATCC BAA-1888 / DSM 6725 / KCTC 15123 / Z-1320) (Anaerocellum thermophilum).